The following is a 149-amino-acid chain: Large ribosomal subunit protein uL22 (149 aa).

This sequence belongs to the universal ribosomal protein uL22 family. In terms of assembly, part of the 50S ribosomal subunit.

Functionally, this protein binds specifically to 23S rRNA; its binding is stimulated by other ribosomal proteins, e.g. L4, L17, and L20. It is important during the early stages of 50S assembly. It makes multiple contacts with different domains of the 23S rRNA in the assembled 50S subunit and ribosome. Its function is as follows. The globular domain of the protein is located near the polypeptide exit tunnel on the outside of the subunit, while an extended beta-hairpin is found that lines the wall of the exit tunnel in the center of the 70S ribosome. The chain is Large ribosomal subunit protein uL22 from Petrotoga mobilis (strain DSM 10674 / SJ95).